The primary structure comprises 242 residues: MGRAFEYRKARKMKRWGNMARVFTKLGKEITIAAKEGGPDVETNPRLRILVQTAKKENMPKENVERAIKKATSKDYTDYKEMNYEGYGPYGIAIFVETATDNTTRTVANVRSYFNKHGGSLGTSGSLEFLFQHKCVFHIVKKDDMDLESLELELIDYGVDELEEDENEIILYGDFSENSNIQKYLEDAGYEIASAEFVRIPNDTKEVTAEQREQIEKLIERIEEDEDVQNVFHNMKEEEGEE.

The protein belongs to the TACO1 family.

It is found in the cytoplasm. The sequence is that of Probable transcriptional regulatory protein PG_0097 from Porphyromonas gingivalis (strain ATCC BAA-308 / W83).